Here is a 236-residue protein sequence, read N- to C-terminus: Peroxisomal membrane protein PMP27 (236 aa).

This sequence belongs to the peroxin-11 family. As to quaternary structure, homooligomer. Interacts with PEX34.

It is found in the peroxisome membrane. Its function is as follows. Involved in peroxisomal proliferation. Promotes peroxisome division and biogenesis. In Saccharomyces cerevisiae (strain ATCC 204508 / S288c) (Baker's yeast), this protein is Peroxisomal membrane protein PMP27 (PEX11).